A 457-amino-acid chain; its full sequence is uncharacterized protein (457 aa).

Positions 1 to 18 (MKLLISLLWSIFFSIVYS) are cleaved as a signal peptide. The Lumenal portion of the chain corresponds to 19–173 (EKTLLNFKHY…GGLPASQFPR (155 aa)). Residues 174–194 (MPISGGITIAYSVILALWMFF) form a helical membrane-spanning segment. Topologically, residues 195-207 (RFQYKHSIVTVQK) are cytoplasmic. A helical membrane pass occupies residues 208-228 (AIMFLLIFSCAQQAVTSIVLD). At 229–243 (TENLRNRGNFTWLGE) the chain is on the lumenal side. The helical transmembrane segment at 244–264 (TLVSILFACQLVLDLALLLIL) threads the bilayer. The Cytoplasmic portion of the chain corresponds to 265 to 284 (SWGYTRYSTNMRDRLFTEAK). The helical transmembrane segment at 285–305 (IPLIICFFALFVVRFFAITIQ) threads the bilayer. Residues 306–314 (SIHLGLWFC) are Lumenal-facing. The chain crosses the membrane as a helical span at residues 315 to 335 (FFFLTACISALYILFGAFVAL). At 336–358 (PSTLRALVEQRYYTLHSIYKIFR) the chain is on the cytoplasmic side. A helical membrane pass occupies residues 359–379 (IMVLCGVVTIFSFSLVALIFC). Residues 380–457 (SNTNNNSTNK…EEDIRADKSK (78 aa)) lie on the Lumenal side of the membrane.

Belongs to the LU7TM family.

Its subcellular location is the endoplasmic reticulum membrane. This is an uncharacterized protein from Schizosaccharomyces pombe (strain 972 / ATCC 24843) (Fission yeast).